The chain runs to 501 residues: Probable malate:quinone oxidoreductase (501 aa).

Belongs to the MQO family. It depends on FAD as a cofactor.

It carries out the reaction (S)-malate + a quinone = a quinol + oxaloacetate. Its pathway is carbohydrate metabolism; tricarboxylic acid cycle; oxaloacetate from (S)-malate (quinone route): step 1/1. The protein is Probable malate:quinone oxidoreductase of Geobacillus kaustophilus (strain HTA426).